The sequence spans 205 residues: Urease accessory protein UreG (205 aa).

14–21 (GPVGSGKT) contributes to the GTP binding site.

This sequence belongs to the SIMIBI class G3E GTPase family. UreG subfamily. In terms of assembly, homodimer. UreD, UreF and UreG form a complex that acts as a GTP-hydrolysis-dependent molecular chaperone, activating the urease apoprotein by helping to assemble the nickel containing metallocenter of UreC. The UreE protein probably delivers the nickel.

The protein localises to the cytoplasm. Functionally, facilitates the functional incorporation of the urease nickel metallocenter. This process requires GTP hydrolysis, probably effectuated by UreG. The chain is Urease accessory protein UreG from Enterobacter sp. (strain 638).